The following is a 110-amino-acid chain: Nucleoid-associated protein bbp_426 (110 aa).

The protein belongs to the YbaB/EbfC family. Homodimer.

The protein localises to the cytoplasm. It is found in the nucleoid. Functionally, binds to DNA and alters its conformation. May be involved in regulation of gene expression, nucleoid organization and DNA protection. This chain is Nucleoid-associated protein bbp_426, found in Buchnera aphidicola subsp. Baizongia pistaciae (strain Bp).